Reading from the N-terminus, the 465-residue chain is Glutamate--tRNA ligase (465 aa).

Residues 11 to 21 (PSPTGFIHLGN) carry the 'HIGH' region motif. The disordered stretch occupies residues 118–139 (GEKPRYDGTWRPAPGKILPPPP). Residues 243 to 247 (KMSKR) carry the 'KMSKS' region motif. Lys-246 contributes to the ATP binding site.

This sequence belongs to the class-I aminoacyl-tRNA synthetase family. Glutamate--tRNA ligase type 1 subfamily. In terms of assembly, monomer.

It localises to the cytoplasm. It carries out the reaction tRNA(Glu) + L-glutamate + ATP = L-glutamyl-tRNA(Glu) + AMP + diphosphate. In terms of biological role, catalyzes the attachment of glutamate to tRNA(Glu) in a two-step reaction: glutamate is first activated by ATP to form Glu-AMP and then transferred to the acceptor end of tRNA(Glu). This is Glutamate--tRNA ligase from Ralstonia pickettii (strain 12J).